The chain runs to 183 residues: Ankyrin repeat domain-containing protein 39 (183 aa).

ANK repeat units follow at residues 30–59, 63–92, 96–125, and 129–158; these read DFER…DPSQ, AGYT…KCDA, GGAT…NPRV, and DGMT…ALKA. At serine 153 the chain carries Phosphoserine.

The protein belongs to the ANKRD39 family.

The sequence is that of Ankyrin repeat domain-containing protein 39 (ANKRD39) from Homo sapiens (Human).